The chain runs to 55 residues: Cicadin (55 aa).

The span at Asn1 to Val26 shows a compositional bias: basic and acidic residues. The interval Asn1–Asp39 is disordered.

Its function is as follows. Possesses antifungal activity against B.cinerea, M.arachidicola, F.oxysporum, R.solani and C.comatus. In terms of biological role, suppresses the activity of HIV-1 reverse transcriptase and stimulates the proliferation of murine splenocytes. This Cicada flammata protein is Cicadin.